A 364-amino-acid polypeptide reads, in one-letter code: MGILEKISEIEKEIARTQKNKATEYHLGLLKAKLAKYRAQLLEPSKSASSKGEGFDVMKSGDARVALIGFPSVGKSTFLSLMTSTASEAASYEFTTLTCIPGVIEYKGANIQLLDLPGIIEGAAQGRGRGRQVIAVARTADVVVMMLDATKGDVQRSLLEKELESVGIRLNKHKPNIYFKPKKGGGISFNSTVTLTQCSEKLVQLILHEYKIFNAEVLFREDCSPDDFIDVIVGNRVYMPCLYVYNKIDQISMEEVDRLARKPNSVVISCGMKLNLDYLLEMLWEYLALTCIYTKKRGQRPDFTDAIILRKGASVEHVCHRIHRSLASQFKYALVWGTSTKYSPQRVGLTHTMEHEDVIQIVKK.

Lysine 21 is modified ((3S)-3-hydroxylysine). The OBG-type G domain occupies 63-288; the sequence is ARVALIGFPS…LLEMLWEYLA (226 aa). Residues 69–76, 94–98, 115–118, 246–249, and 269–271 contribute to the GTP site; these read GFPSVGKS, FTTLT, DLPG, NKID, and SCG. Mg(2+) contacts are provided by serine 76 and threonine 96. The TGS domain maps to 288 to 363; that stretch reads ALTCIYTKKR…EHEDVIQIVK (76 aa).

This sequence belongs to the TRAFAC class OBG-HflX-like GTPase superfamily. OBG GTPase family. As to quaternary structure, interacts with RWDD1; this interaction confers protection to polyubiquitination and proteolytic degradation. Interacts with JMJD7; this interaction is direct. Mg(2+) is required as a cofactor. In terms of processing, polyubiquitinated. Hydroxylated (with S stereochemistry) at C-3 of Lys-21 by JMJD7. Fairly high levels in liver, heart, kidney, and brain. Very low levels in lung, spleen, testis and skeletal muscle.

The protein localises to the nucleus. The protein resides in the cytoplasm. It catalyses the reaction GTP + H2O = GDP + phosphate + H(+). Its function is as follows. Catalyzes the conversion of GTP to GDP through hydrolysis of the gamma-phosphate bond in GTP. When hydroxylated at C-3 of 'Lys-21' by JMJD7, may bind to RNA and play a role in translation. The sequence is that of Developmentally-regulated GTP-binding protein 2 (Drg2) from Mus musculus (Mouse).